The chain runs to 157 residues: MKCPFCGFADTRVIDSRLGKEGNNIRRRRECSQCERRFTTFERVEDMLPLIIKKDARRQPFDRKKVIGGIQRACEKRPVSIATIEKIVDTLERQLQESGEREIESKIIGQAVMDALHDLDQVAYVRFASVYRQFKDINEFMAELKDILAEGGNVRDN.

A zinc finger spans residues 3-34; that stretch reads CPFCGFADTRVIDSRLGKEGNNIRRRRECSQC. The 91-residue stretch at 49–139 folds into the ATP-cone domain; it reads PLIIKKDARR…VYRQFKDINE (91 aa).

It belongs to the NrdR family. Zn(2+) serves as cofactor.

Negatively regulates transcription of bacterial ribonucleotide reductase nrd genes and operons by binding to NrdR-boxes. This chain is Transcriptional repressor NrdR, found in Syntrophotalea carbinolica (strain DSM 2380 / NBRC 103641 / GraBd1) (Pelobacter carbinolicus).